Consider the following 353-residue polypeptide: Pleckstrin-2 (353 aa).

Met-1 is subject to N-acetylmethionine. One can recognise a PH 1 domain in the interval 4–104 (GVLKEGFLVK…WAFEITGAIH (101 aa)). Ser-120 is modified (phosphoserine). Residues 139–225 (SNTGIRSSPN…DSTALYTFAE (87 aa)) form the DEP domain. The PH 2 domain occupies 247-353 (TVVKQGYLAK…EWIEAIKKLT (107 aa)).

The protein localises to the cell projection. The protein resides in the lamellipodium membrane. It localises to the cytoplasm. Its subcellular location is the cytoskeleton. In terms of biological role, may help orchestrate cytoskeletal arrangement. Contribute to lamellipodia formation. The protein is Pleckstrin-2 (PLEK2) of Homo sapiens (Human).